The following is a 113-amino-acid chain: Beta-microseminoprotein (113 aa).

The first 20 residues, 1-20, serve as a signal peptide directing secretion; the sequence is MKARLGSLLVLATLVTASNA. Intrachain disulfides connect Cys-22–Cys-69, Cys-38–Cys-61, Cys-56–Cys-92, Cys-59–Cys-68, and Cys-83–Cys-106.

This sequence belongs to the beta-microseminoprotein family. In terms of assembly, homodimer; Interacts with PI16.

Its subcellular location is the secreted. This is Beta-microseminoprotein (Msmb) from Rattus norvegicus (Rat).